A 473-amino-acid polypeptide reads, in one-letter code: Chromosomal replication initiator protein DnaA (473 aa).

The domain I, interacts with DnaA modulators stretch occupies residues 1–87; that stretch reads MADGEESISV…LAVTTFAIVV (87 aa). Residues 87–132 form a domain II region; the sequence is VNPEIQQESLSTVGEPEPTPAPYLDVATFTVAPPAEITAPPRNGDT. The tract at residues 133 to 349 is domain III, AAA+ region; it reads RLNSKYSFDN…GTLIRVTAFA (217 aa). Positions 177, 179, 180, and 181 each coordinate ATP. The domain IV, binds dsDNA stretch occupies residues 350–473; the sequence is SLNRTPVDMP…LTSRIKQNHR (124 aa).

It belongs to the DnaA family. Oligomerizes as a right-handed, spiral filament on DNA at oriC.

Its subcellular location is the cytoplasm. Functionally, plays an essential role in the initiation and regulation of chromosomal replication. ATP-DnaA binds to the origin of replication (oriC) to initiate formation of the DNA replication initiation complex once per cell cycle. Binds the DnaA box (a 9 base pair repeat at the origin) and separates the double-stranded (ds)DNA. Forms a right-handed helical filament on oriC DNA; dsDNA binds to the exterior of the filament while single-stranded (ss)DNA is stabiized in the filament's interior. The ATP-DnaA-oriC complex binds and stabilizes one strand of the AT-rich DNA unwinding element (DUE), permitting loading of DNA polymerase. After initiation quickly degrades to an ADP-DnaA complex that is not apt for DNA replication. Binds acidic phospholipids. The protein is Chromosomal replication initiator protein DnaA of Leifsonia xyli subsp. xyli (strain CTCB07).